The sequence spans 437 residues: Nuclear envelope integral membrane protein 1 (437 aa).

A signal peptide spans Met-1–Ala-44. Residue Asn-123 is glycosylated (N-linked (GlcNAc...) asparagine). A run of 5 helical transmembrane segments spans residues Pro-159–Ser-179, Ile-183–Phe-203, Pro-214–Phe-234, Tyr-244–Tyr-264, and Gly-288–Leu-308. The segment at Phe-184–Gln-295 is a; required for its colocalization with lamins at the nuclear envelope. Residues Pro-334–Glu-403 form a b; required for interaction with RAN-GTP region. The required for nuclear localization stretch occupies residues Pro-334 to Thr-437. 3 positions are modified to phosphoserine: Ser-366, Ser-419, and Ser-420. Residues Asp-415–Ser-425 show a composition bias toward acidic residues. Residues Asp-415–Thr-437 form a disordered region. The span at Pro-428 to Thr-437 shows a compositional bias: polar residues.

The protein belongs to the NEMP family. As to quaternary structure, homooligomer. Interacts with RAN-GTP. Interacts with EMD. In terms of processing, phosphorylated. Phosphorylation may regulate its interaction with RAN-GTP. As to expression, in the ovary, expression is strongest in primordial follicle oocytes and rapidly declines as oocytes mature and move from the cortex (at protein level).

The protein resides in the nucleus inner membrane. It localises to the nucleus envelope. In terms of biological role, together with EMD, contributes to nuclear envelope stiffness in germ cells. Required for female fertility. Essential for normal erythropoiesis. Required for efficient nuclear envelope opening and enucleation during the late stages of erythroblast maturation. The polypeptide is Nuclear envelope integral membrane protein 1 (Nemp1) (Mus musculus (Mouse)).